The sequence spans 114 residues: T cell receptor beta variable 27 (114 aa).

A signal peptide spans 1–21 (MGPQLLGYVVLCLLGAGPLEA). The Ig-like domain occupies 22 to 114 (QVTQNPRYLI…TSLYFCASSL (93 aa)). Residues cysteine 42 and cysteine 110 are joined by a disulfide bond. Asparagine 103 is a glycosylation site (N-linked (GlcNAc...) asparagine).

In terms of assembly, alpha-beta TR is a heterodimer composed of an alpha and beta chain; disulfide-linked. The alpha-beta TR is associated with the transmembrane signaling CD3 coreceptor proteins to form the TR-CD3 (TcR or TCR). The assembly of alpha-beta TR heterodimers with CD3 occurs in the endoplasmic reticulum where a single alpha-beta TR heterodimer associates with one CD3D-CD3E heterodimer, one CD3G-CD3E heterodimer and one CD247 homodimer forming a stable octameric structure. CD3D-CD3E and CD3G-CD3E heterodimers preferentially associate with TR alpha and TR beta chains, respectively. The association of the CD247 homodimer is the last step of TcR assembly in the endoplasmic reticulum and is required for transport to the cell surface.

Its subcellular location is the cell membrane. Its function is as follows. V region of the variable domain of T cell receptor (TR) beta chain that participates in the antigen recognition. Alpha-beta T cell receptors are antigen specific receptors which are essential to the immune response and are present on the cell surface of T lymphocytes. Recognize peptide-major histocompatibility (MH) (pMH) complexes that are displayed by antigen presenting cells (APC), a prerequisite for efficient T cell adaptive immunity against pathogens. Binding of alpha-beta TR to pMH complex initiates TR-CD3 clustering on the cell surface and intracellular activation of LCK that phosphorylates the ITAM motifs of CD3G, CD3D, CD3E and CD247 enabling the recruitment of ZAP70. In turn ZAP70 phosphorylates LAT, which recruits numerous signaling molecules to form the LAT signalosome. The LAT signalosome propagates signal branching to three major signaling pathways, the calcium, the mitogen-activated protein kinase (MAPK) kinase and the nuclear factor NF-kappa-B (NF-kB) pathways, leading to the mobilization of transcription factors that are critical for gene expression and essential for T cell growth and differentiation. The T cell repertoire is generated in the thymus, by V-(D)-J rearrangement. This repertoire is then shaped by intrathymic selection events to generate a peripheral T cell pool of self-MH restricted, non-autoaggressive T cells. Post-thymic interaction of alpha-beta TR with the pMH complexes shapes TR structural and functional avidity. The sequence is that of T cell receptor beta variable 27 from Homo sapiens (Human).